The primary structure comprises 407 residues: Na(+)-translocating NADH-quinone reductase subunit F (407 aa).

A helical membrane pass occupies residues 6–26; that stretch reads IFLAIGMFTAIVLGLVAIILV. In terms of domain architecture, 2Fe-2S ferredoxin-type spans 35–127; it reads GDVTIQINGE…DMQIRVPEEV (93 aa). [2Fe-2S] cluster-binding residues include C70, C76, C79, and C111. The region spanning 130 to 269 is the FAD-binding FR-type domain; that stretch reads VKKWECTVES…YGPFGEFFAK (140 aa). Residues 272–389 are catalytic; it reads EAEMVFIGGG…PMMNAAVIKM (118 aa).

This sequence belongs to the NqrF family. Composed of six subunits; NqrA, NqrB, NqrC, NqrD, NqrE and NqrF. The cofactor is [2Fe-2S] cluster. Requires FAD as cofactor.

It localises to the cell inner membrane. It catalyses the reaction a ubiquinone + n Na(+)(in) + NADH + H(+) = a ubiquinol + n Na(+)(out) + NAD(+). Functionally, NQR complex catalyzes the reduction of ubiquinone-1 to ubiquinol by two successive reactions, coupled with the transport of Na(+) ions from the cytoplasm to the periplasm. The first step is catalyzed by NqrF, which accepts electrons from NADH and reduces ubiquinone-1 to ubisemiquinone by a one-electron transfer pathway. The polypeptide is Na(+)-translocating NADH-quinone reductase subunit F (Pseudomonas aeruginosa (strain ATCC 15692 / DSM 22644 / CIP 104116 / JCM 14847 / LMG 12228 / 1C / PRS 101 / PAO1)).